Consider the following 133-residue polypeptide: Salivary cystatin-L2 (133 aa).

Positions 1-18 (MTSSLALVLLLGGAAVCA) are cleaved as a signal peptide. The 85-residue stretch at 34-118 (DDPKYLELAH…RTCTAVIYEN (85 aa)) folds into the Cystatin domain.

The protein belongs to the cystatin family. In terms of tissue distribution, salivary gland, midgut and other tissues.

The protein resides in the secreted. Inhibitor of cysteine proteinases. Inhibits host cathepsin L (CTSL) and S (CTSS). Modulates production of various cytokines and chemokines in lipopolysaccharide (LPS)-stimulated mouse dendritic cell. Suppresses maturation of mouse bone-marrow-derived dendritic cells (BMDCs). Functionally, (Microbial infection) Modulates Borrelia miyamotoi-stimulated immune responses in mice by suppressing activities of host dendritic and T-cells. The protein is Salivary cystatin-L2 of Ixodes persulcatus (Taiga tick).